A 742-amino-acid polypeptide reads, in one-letter code: Polyribonucleotide nucleotidyltransferase (742 aa).

Positions 515 and 521 each coordinate Mg(2+). The KH domain maps to 581–640 (PRIITITIPVDKIGEVIGPKGKIINQIQDDTGASISIEDDGTIYIGATNGEAAEAAKNAV). The S1 motif domain occupies 652–724 (GERYLGTVVK…DRGKLSLVPV (73 aa)).

This sequence belongs to the polyribonucleotide nucleotidyltransferase family. It depends on Mg(2+) as a cofactor.

The protein localises to the cytoplasm. The enzyme catalyses RNA(n+1) + phosphate = RNA(n) + a ribonucleoside 5'-diphosphate. In terms of biological role, involved in mRNA degradation. Catalyzes the phosphorolysis of single-stranded polyribonucleotides processively in the 3'- to 5'-direction. The sequence is that of Polyribonucleotide nucleotidyltransferase from Nocardioides sp. (strain ATCC BAA-499 / JS614).